The following is a 302-amino-acid chain: 33 kDa chaperonin (302 aa).

Cystine bridges form between cysteine 234-cysteine 236 and cysteine 267-cysteine 270.

The protein belongs to the HSP33 family. In terms of processing, under oxidizing conditions two disulfide bonds are formed involving the reactive cysteines. Under reducing conditions zinc is bound to the reactive cysteines and the protein is inactive.

The protein resides in the cytoplasm. Functionally, redox regulated molecular chaperone. Protects both thermally unfolding and oxidatively damaged proteins from irreversible aggregation. Plays an important role in the bacterial defense system toward oxidative stress. The sequence is that of 33 kDa chaperonin from Neisseria gonorrhoeae (strain ATCC 700825 / FA 1090).